A 369-amino-acid polypeptide reads, in one-letter code: Transmembrane protein adipocyte-associated 1 (369 aa).

The N-linked (GlcNAc...) asparagine glycan is linked to N20. Helical transmembrane passes span 45–65 (LLLL…LPLA), 73–93 (SSPI…VGIA), 120–140 (FFLL…GHLE), 148–168 (VLAI…TLEI), 189–209 (QFWL…VILP), 237–257 (LLQG…LCCV), and 262–282 (FLYF…GFFG). Residue N329 is glycosylated (N-linked (GlcNAc...) asparagine).

It belongs to the UPF0359 family. Ubiquitous, with higher levels in heart, brain, lung, liver and kidney.

The protein resides in the membrane. The chain is Transmembrane protein adipocyte-associated 1 (Tpra1) from Mus musculus (Mouse).